A 108-amino-acid chain; its full sequence is Holo-[acyl-carrier-protein] synthase (108 aa).

Residues D9 and E54 each contribute to the Mg(2+) site.

This sequence belongs to the P-Pant transferase superfamily. AcpS family. Mg(2+) is required as a cofactor.

The protein localises to the cytoplasm. The enzyme catalyses apo-[ACP] + CoA = holo-[ACP] + adenosine 3',5'-bisphosphate + H(+). Transfers the 4'-phosphopantetheine moiety from coenzyme A to a Ser of acyl-carrier-protein. The polypeptide is Holo-[acyl-carrier-protein] synthase (Mycoplasmopsis pulmonis (strain UAB CTIP) (Mycoplasma pulmonis)).